The sequence spans 312 residues: Ribosomal RNA small subunit methyltransferase H (312 aa).

S-adenosyl-L-methionine contacts are provided by residues 30-32, Asp50, Phe80, Asp98, and Gln105; that span reads GGH.

The protein belongs to the methyltransferase superfamily. RsmH family.

It is found in the cytoplasm. The catalysed reaction is cytidine(1402) in 16S rRNA + S-adenosyl-L-methionine = N(4)-methylcytidine(1402) in 16S rRNA + S-adenosyl-L-homocysteine + H(+). Functionally, specifically methylates the N4 position of cytidine in position 1402 (C1402) of 16S rRNA. This chain is Ribosomal RNA small subunit methyltransferase H, found in Lawsonia intracellularis (strain PHE/MN1-00).